The primary structure comprises 161 residues: Nucleotide-binding protein Bcep18194_A5887 (161 aa).

It belongs to the YajQ family.

Its function is as follows. Nucleotide-binding protein. In Burkholderia lata (strain ATCC 17760 / DSM 23089 / LMG 22485 / NCIMB 9086 / R18194 / 383), this protein is Nucleotide-binding protein Bcep18194_A5887.